We begin with the raw amino-acid sequence, 70 residues long: ATP synthase subunit c (70 aa).

2 helical membrane-spanning segments follow: residues 4 to 24 (IASA…NGLI) and 47 to 67 (FVGV…AFMV).

It belongs to the ATPase C chain family. As to quaternary structure, F-type ATPases have 2 components, F(1) - the catalytic core - and F(0) - the membrane proton channel. F(1) has five subunits: alpha(3), beta(3), gamma(1), delta(1), epsilon(1). F(0) has three main subunits: a(1), b(2) and c(10-14). The alpha and beta chains form an alternating ring which encloses part of the gamma chain. F(1) is attached to F(0) by a central stalk formed by the gamma and epsilon chains, while a peripheral stalk is formed by the delta and b chains.

It localises to the cell membrane. Its function is as follows. F(1)F(0) ATP synthase produces ATP from ADP in the presence of a proton or sodium gradient. F-type ATPases consist of two structural domains, F(1) containing the extramembraneous catalytic core and F(0) containing the membrane proton channel, linked together by a central stalk and a peripheral stalk. During catalysis, ATP synthesis in the catalytic domain of F(1) is coupled via a rotary mechanism of the central stalk subunits to proton translocation. In terms of biological role, key component of the F(0) channel; it plays a direct role in translocation across the membrane. A homomeric c-ring of between 10-14 subunits forms the central stalk rotor element with the F(1) delta and epsilon subunits. This chain is ATP synthase subunit c, found in Priestia megaterium (strain ATCC 12872 / QMB1551) (Bacillus megaterium).